Reading from the N-terminus, the 314-residue chain is Cathepsin L 2 (314 aa).

An N-terminal signal peptide occupies residues 1-24; sequence MMLLGASLYLNNTQEVSDEIDTAN. The propeptide at 25–109 is activation peptide; the sequence is LYANWKMKYN…NASNANFQYK (85 aa). Cystine bridges form between Cys132-Cys175, Cys166-Cys207, and Cys259-Cys302. Cys135 is a catalytic residue. Active-site residues include His265 and Asn282.

This sequence belongs to the peptidase C1 family.

Its subcellular location is the secreted. The catalysed reaction is Specificity close to that of papain. As compared to cathepsin B, cathepsin L exhibits higher activity toward protein substrates, but has little activity on Z-Arg-Arg-NHMec, and no peptidyl-dipeptidase activity.. Functionally, may be involved in extracellular digestion. This chain is Cathepsin L 2, found in Paramecium tetraurelia.